A 435-amino-acid polypeptide reads, in one-letter code: Chaperone SurA (435 aa).

A signal peptide spans 1-24 (MRLRSFAFLGFMLLVAMAPSMASA). PpiC domains lie at 173–274 (DTAY…KLID) and 286–385 (VTEN…ELED).

Its subcellular location is the periplasm. It catalyses the reaction [protein]-peptidylproline (omega=180) = [protein]-peptidylproline (omega=0). In terms of biological role, chaperone involved in the correct folding and assembly of outer membrane proteins. Recognizes specific patterns of aromatic residues and the orientation of their side chains, which are found more frequently in integral outer membrane proteins. May act in both early periplasmic and late outer membrane-associated steps of protein maturation. The sequence is that of Chaperone SurA from Chromohalobacter salexigens (strain ATCC BAA-138 / DSM 3043 / CIP 106854 / NCIMB 13768 / 1H11).